The primary structure comprises 127 residues: Large ribosomal subunit protein bL19 (127 aa).

This sequence belongs to the bacterial ribosomal protein bL19 family.

This protein is located at the 30S-50S ribosomal subunit interface and may play a role in the structure and function of the aminoacyl-tRNA binding site. The chain is Large ribosomal subunit protein bL19 from Synechococcus sp. (strain JA-3-3Ab) (Cyanobacteria bacterium Yellowstone A-Prime).